The primary structure comprises 426 residues: Glucose-6-phosphate isomerase (426 aa).

E282 (proton donor) is an active-site residue. Active-site residues include H303 and K417.

The protein belongs to the GPI family.

Its subcellular location is the cytoplasm. The enzyme catalyses alpha-D-glucose 6-phosphate = beta-D-fructose 6-phosphate. The protein operates within carbohydrate biosynthesis; gluconeogenesis. It participates in carbohydrate degradation; glycolysis; D-glyceraldehyde 3-phosphate and glycerone phosphate from D-glucose: step 2/4. Catalyzes the reversible isomerization of glucose-6-phosphate to fructose-6-phosphate. This Onion yellows phytoplasma (strain OY-M) protein is Glucose-6-phosphate isomerase.